The chain runs to 327 residues: Zinc transport protein ZntB (327 aa).

At M1–M273 the chain is on the cytoplasmic side. Residues A274–I294 traverse the membrane as a helical segment. The Periplasmic portion of the chain corresponds to P295–Q300. The helical transmembrane segment at F301 to L321 threads the bilayer. Over Y322 to L327 the chain is Cytoplasmic.

It belongs to the CorA metal ion transporter (MIT) (TC 1.A.35) family.

The protein resides in the cell inner membrane. The catalysed reaction is Zn(2+)(out) + H(+)(out) = Zn(2+)(in) + H(+)(in). Its function is as follows. Zinc transporter. Acts as a Zn(2+):proton symporter, which likely mediates zinc ion uptake. The chain is Zinc transport protein ZntB from Shigella flexneri serotype 5b (strain 8401).